Here is a 153-residue protein sequence, read N- to C-terminus: Putative pre-16S rRNA nuclease (153 aa).

Belongs to the YqgF nuclease family.

It is found in the cytoplasm. In terms of biological role, could be a nuclease involved in processing of the 5'-end of pre-16S rRNA. This is Putative pre-16S rRNA nuclease from Prochlorococcus marinus (strain SARG / CCMP1375 / SS120).